The following is a 665-amino-acid chain: Secreted LysM effector Lys3 (665 aa).

Positions 1-19 (MLWLTVSLTGFALLGVVAA) are cleaved as a signal peptide. N-linked (GlcNAc...) asparagine glycosylation is found at Asn43 and Asn153. LysM domains lie at 166–211 (RTYT…TLCL), 216–264 (TLRK…YICI), and 303–349 (KWYV…AYCV). A glycan (N-linked (GlcNAc...) asparagine) is linked at Asn234. The N-linked (GlcNAc...) asparagine glycan is linked to Asn398. One can recognise a LysM 4 domain in the interval 409–454 (SWSDAAKLNSCSFIAHINGVTVSQLLQWNPSLSKDSCSLSRELYYC). N-linked (GlcNAc...) asparagine glycosylation is present at Asn531. The interval 585 to 610 (SSVSMTNSAPATATSTGGPPAPTQDG) is disordered. Low complexity predominate over residues 592–602 (SAPATATSTGG). Asn614 carries N-linked (GlcNAc...) asparagine glycosylation. The LysM 5 domain occupies 617–663 (KWHVVESGDGCWAIYTKYGITSDQLFEWNTKISKDCSNIWLGYAVCV).

The protein belongs to the secreted LysM effector family.

Functionally, might have a role in sequestration of chitin oligosaccharides (breakdown products of fungal cell walls that are released during invasion and act as triggers of host immunity) to dampen host defense. This chain is Secreted LysM effector Lys3, found in Pochonia chlamydosporia (strain 123) (Metacordyceps chlamydosporia).